We begin with the raw amino-acid sequence, 74 residues long: Large ribosomal subunit protein bL31 (74 aa).

Zn(2+) contacts are provided by C16, C18, C38, and C41.

The protein belongs to the bacterial ribosomal protein bL31 family. Type A subfamily. In terms of assembly, part of the 50S ribosomal subunit. Zn(2+) is required as a cofactor.

Its function is as follows. Binds the 23S rRNA. The polypeptide is Large ribosomal subunit protein bL31 (Mycolicibacterium vanbaalenii (strain DSM 7251 / JCM 13017 / BCRC 16820 / KCTC 9966 / NRRL B-24157 / PYR-1) (Mycobacterium vanbaalenii)).